Here is a 391-residue protein sequence, read N- to C-terminus: ATP phosphoribosyltransferase regulatory subunit (391 aa).

The protein belongs to the class-II aminoacyl-tRNA synthetase family. HisZ subfamily. Heteromultimer composed of HisG and HisZ subunits.

The protein localises to the cytoplasm. It participates in amino-acid biosynthesis; L-histidine biosynthesis; L-histidine from 5-phospho-alpha-D-ribose 1-diphosphate: step 1/9. Functionally, required for the first step of histidine biosynthesis. May allow the feedback regulation of ATP phosphoribosyltransferase activity by histidine. This Prochlorococcus marinus (strain SARG / CCMP1375 / SS120) protein is ATP phosphoribosyltransferase regulatory subunit.